Consider the following 477-residue polypeptide: uncharacterized protein (477 aa).

The N-terminal stretch at 1–18 is a signal peptide; sequence MWTALVLVWISSVPLSRS. The Extracellular segment spans residues 19 to 427; sequence HTVPAVPRHL…DPLTPSLVNK (409 aa). N-linked (GlcNAc...) asparagine glycosylation is found at N40, N51, and N77. Disordered stretches follow at residues 79-103, 239-366, and 378-398; these read TRVTAETTPHGTNTSTPTTREGTAD, GTIN…TGGP, and KATAGTASAGPTSRSSGDVKV. Low complexity predominate over residues 85-97; sequence TTPHGTNTSTPTT. Composition is skewed to polar residues over residues 253-288 and 298-309; these read PAKSTPTNTSSRNPIPTSGAQTQGTTIQVTTDQPVH and PSNTTLEPNTPK. The N-linked (GlcNAc...) asparagine glycan is linked to N300. Low complexity-rich tracts occupy residues 310 to 326, 348 to 361, and 378 to 393; these read SVASTSSAVVTTTQVQT, TSPTTQPSPLLPTQ, and KATAGTASAGPTSRSS. A helical transmembrane segment spans residues 428–448; it reads MFLLVVLIVGVTLFIAVLMMF. The Cytoplasmic segment spans residues 449-477; sequence ALQAYESYKKKDYTQVDYLINGMYADSEM.

It is found in the cell membrane. It localises to the golgi apparatus. Its subcellular location is the trans-Golgi network membrane. This is an uncharacterized protein from Rattus norvegicus (Rat).